Here is a 484-residue protein sequence, read N- to C-terminus: Toluene efflux pump outer membrane protein TtgC (484 aa).

A signal peptide spans 1-17; that stretch reads MTKSLLSLAVTAFILGG. The N-palmitoyl cysteine moiety is linked to residue Cys-18. Residue Cys-18 is the site of S-diacylglycerol cysteine attachment.

Belongs to the outer membrane factor (OMF) (TC 1.B.17) family.

Its subcellular location is the cell outer membrane. The outer membrane component of a constitutive organic solvent efflux system. Is involved in export of toluene, styrene, m-xylene, propylbenzene and ethylbenzene. Also exports AMP and the antibiotics carbenicillin, nalidixic acid, chloramphenicol and tetracycline. This Pseudomonas putida (strain DOT-T1E) protein is Toluene efflux pump outer membrane protein TtgC (ttgC).